The following is a 398-amino-acid chain: Cell cycle checkpoint control protein RAD9B (398 aa).

The segment covering Arg-272–Leu-281 has biased composition (polar residues). Residues Arg-272–Pro-359 are disordered. The segment covering Ser-324–Ser-336 has biased composition (low complexity). A phosphoserine mark is found at Ser-349 and Ser-358.

It belongs to the rad9 family. In terms of assembly, interacts with HUS1, HUS1B, RAD1, RAD9A and RAD17.

The protein is Cell cycle checkpoint control protein RAD9B (Rad9b) of Rattus norvegicus (Rat).